The following is a 574-amino-acid chain: Sulfite reductase [NADPH] hemoprotein beta-component (574 aa).

[4Fe-4S] cluster is bound by residues Cys439, Cys445, Cys484, and Cys488. Position 488 (Cys488) interacts with siroheme.

Belongs to the nitrite and sulfite reductase 4Fe-4S domain family. Alpha(8)-beta(8). The alpha component is a flavoprotein, the beta component is a hemoprotein. Requires siroheme as cofactor. [4Fe-4S] cluster serves as cofactor.

The catalysed reaction is hydrogen sulfide + 3 NADP(+) + 3 H2O = sulfite + 3 NADPH + 4 H(+). Its pathway is sulfur metabolism; hydrogen sulfide biosynthesis; hydrogen sulfide from sulfite (NADPH route): step 1/1. In terms of biological role, component of the sulfite reductase complex that catalyzes the 6-electron reduction of sulfite to sulfide. This is one of several activities required for the biosynthesis of L-cysteine from sulfate. The protein is Sulfite reductase [NADPH] hemoprotein beta-component of Paenibacillus sp. (strain JDR-2).